A 154-amino-acid polypeptide reads, in one-letter code: MHCPFCRHPDSRVIDSRETDEGQAIRRRRSCPECGRRFTTVETAVLAVVKRSGVTEPFSREKVISGVRRACQGRQVDDDALNLLAQQVEDTVRAAGSPEVPSHEVGLAILGPLRDLDEVAYLRFASVYRSFESADDFEREIQALREHRGVATPG.

Residues Cys3 to Cys34 fold into a zinc finger. Residues Leu46–Asp136 form the ATP-cone domain.

It belongs to the NrdR family. Zn(2+) serves as cofactor.

Negatively regulates transcription of bacterial ribonucleotide reductase nrd genes and operons by binding to NrdR-boxes. The sequence is that of Transcriptional repressor NrdR from Mycobacterium avium (strain 104).